We begin with the raw amino-acid sequence, 342 residues long: N-acetyl-gamma-glutamyl-phosphate reductase (342 aa).

C149 is a catalytic residue.

Belongs to the NAGSA dehydrogenase family. Type 1 subfamily.

It localises to the cytoplasm. It catalyses the reaction N-acetyl-L-glutamate 5-semialdehyde + phosphate + NADP(+) = N-acetyl-L-glutamyl 5-phosphate + NADPH + H(+). It functions in the pathway amino-acid biosynthesis; L-arginine biosynthesis; N(2)-acetyl-L-ornithine from L-glutamate: step 3/4. Its function is as follows. Catalyzes the NADPH-dependent reduction of N-acetyl-5-glutamyl phosphate to yield N-acetyl-L-glutamate 5-semialdehyde. The sequence is that of N-acetyl-gamma-glutamyl-phosphate reductase from Rhodobacter capsulatus (strain ATCC BAA-309 / NBRC 16581 / SB1003).